The primary structure comprises 462 residues: Centrosomal protein of 55 kDa (462 aa).

The span at 1-11 shows a compositional bias: basic and acidic residues; sequence MSSRSPKDLIK. Positions 1–25 are disordered; it reads MSSRSPKDLIKSKWGSRPSSSKSDT. Residues 12–23 show a composition bias toward low complexity; it reads SKWGSRPSSSKS. 2 coiled-coil regions span residues 50–185 and 228–400; these read KVAN…QQWL and YLQE…KQLH. A phosphoserine mark is found at S96 and S99. The tract at residues 157-235 is interaction with TSG101; the sequence is ANCFNSSMNS…EGYLQEEKQK (79 aa). Residues 160–214 are interaction with PDCD6IP; it reads FNSSMNSIHEKEMQLKDALEKNQQWLVYDQQREAYVKGLLAKIFELEKRTETAAA. A required for localization to the interphase centrosome and to the midbody during cytokinesis region spans residues 354–462; sequence QMQACTLDFE…LLVHVEYCMK (109 aa). S423 and S426 each carry phosphoserine. T428 carries the post-translational modification Phosphothreonine. Phosphoserine; by PLK1 is present on S434.

Homodimer. Interacts (phosphorylated on Ser-423 and Ser-426) with PLK1; the interaction is indirect via the MTMR3:MTMR4 heterooligomer, occurs during early mitosis, regulates the phosphorylation of CEP55 by PLK1 and its recruitment to the midbody where it can mediate cell abscission. Interacts with AKAP9/CG-NAP; the interaction occurs in interphase and is lost upon mitotic entry. Interacts with PCNT/Kendrin; the interaction occurs in interphase and is lost upon mitotic entry. Directly interacts with PDCD6IP; this interaction is required for PDCD6IP targeting to the midbody; CEP55 binds PDCD6IP in a 2:1 stoichiometry; PDCD6IP competes with TSG101 for the same binding site. Interacts with TSG101; TSG101 competes with PDCD6IP for the same binding site; interaction is required for cytokinesis. Interacts with MVB12A, VPS37B, VPS37C and VPS28. There is a hierachy of phosphorylation, where both Ser-423 and Ser-426 are phosphorylated at the onset of mitosis, prior to Ser-434. Phosphorylation at Ser-423 and Ser-426 is required for dissociation from the centrosome at the G2/M boundary. Phosphorylation at the 3 sites, Ser-423, Ser-426 and Ser-434, is required for protein function at the final stages of cell division to complete cytokinesis successfully.

The protein resides in the cytoplasm. The protein localises to the cytoskeleton. It is found in the microtubule organizing center. It localises to the centrosome. Its subcellular location is the centriole. The protein resides in the cleavage furrow. The protein localises to the midbody. It is found in the midbody ring. In terms of biological role, plays a role in mitotic exit and cytokinesis. Recruits PDCD6IP and TSG101 to midbody during cytokinesis. Required for successful completion of cytokinesis. Not required for microtubule nucleation. Plays a role in the development of the brain and kidney. In Rattus norvegicus (Rat), this protein is Centrosomal protein of 55 kDa.